Consider the following 427-residue polypeptide: Trigger factor (427 aa).

In terms of domain architecture, PPIase FKBP-type spans 160-240 (TDTVIGDVVK…VKEVKRLELP (81 aa)).

The protein belongs to the FKBP-type PPIase family. Tig subfamily.

Its subcellular location is the cytoplasm. It carries out the reaction [protein]-peptidylproline (omega=180) = [protein]-peptidylproline (omega=0). Functionally, involved in protein export. Acts as a chaperone by maintaining the newly synthesized protein in an open conformation. Functions as a peptidyl-prolyl cis-trans isomerase. This Chlorobium limicola (strain DSM 245 / NBRC 103803 / 6330) protein is Trigger factor.